The following is a 489-amino-acid chain: Blue-light-activated histidine kinase (489 aa).

The PAS domain occupies 19-93; sequence ATDPFRAAVE…AIKSAIAAEK (75 aa). Cys69 is modified (S-4a-FMN cysteine). 2 PAC domains span residues 93–147 and 232–281; these read KPID…ELEK and YSIE…NKAL. Residues 259 to 341 form an HWE histidine kinase domain region; sequence NPLVLGIVQD…LLKENWAGAT (83 aa). His288 carries the phosphohistidine; by autocatalysis modification.

Post-translationally, FMN binds covalently to cysteine after exposure to blue light and this bond is spontaneously broken in the dark.

It carries out the reaction ATP + protein L-histidine = ADP + protein N-phospho-L-histidine.. Photosensitive kinase that is involved in increased bacterial virulence upon exposure to light. Once ejected from an infected animal host, sunlight acts as an environmental signal that increases the virulence of the bacterium, preparing it for infection of the next host. This photoreceptor protein is directly related to the bacterium's survival and replication within host macrophages, as it is required for optimal replication of bacteria inside macrophages. This is Blue-light-activated histidine kinase from Brucella abortus (strain 2308).